The primary structure comprises 236 residues: Large ribosomal subunit protein uL1 (236 aa).

This sequence belongs to the universal ribosomal protein uL1 family. Part of the 50S ribosomal subunit.

Binds directly to 23S rRNA. The L1 stalk is quite mobile in the ribosome, and is involved in E site tRNA release. Its function is as follows. Protein L1 is also a translational repressor protein, it controls the translation of the L11 operon by binding to its mRNA. This Protochlamydia amoebophila (strain UWE25) protein is Large ribosomal subunit protein uL1.